Reading from the N-terminus, the 58-residue chain is Potassium channel toxin alpha-KTx 9.9 (58 aa).

A signal peptide spans 1 to 21 (KKTSRLFTLVLIVLAMNVMMA). Residues 22–30 (IISDPVVEA) constitute a propeptide that is removed on maturation. 3 disulfide bridges follow: C33–C49, C36–C54, and C40–C56.

Belongs to the short scorpion toxin superfamily. Potassium channel inhibitor family. Alpha-KTx 09 subfamily. Expressed by the venom gland.

It localises to the secreted. In terms of biological role, potassium channel inhibitor. The chain is Potassium channel toxin alpha-KTx 9.9 from Buthus israelis (Israeli scorpion).